The following is a 162-amino-acid chain: NADH-quinone oxidoreductase subunit I (162 aa).

2 consecutive 4Fe-4S ferredoxin-type domains span residues 53 to 83 and 93 to 122; these read LRRY…IEAE and TRYD…EGPN. Cysteine 63, cysteine 66, cysteine 69, cysteine 73, cysteine 102, cysteine 105, cysteine 108, and cysteine 112 together coordinate [4Fe-4S] cluster.

Belongs to the complex I 23 kDa subunit family. In terms of assembly, NDH-1 is composed of 14 different subunits. Subunits NuoA, H, J, K, L, M, N constitute the membrane sector of the complex. [4Fe-4S] cluster serves as cofactor.

It localises to the cell inner membrane. It carries out the reaction a quinone + NADH + 5 H(+)(in) = a quinol + NAD(+) + 4 H(+)(out). NDH-1 shuttles electrons from NADH, via FMN and iron-sulfur (Fe-S) centers, to quinones in the respiratory chain. The immediate electron acceptor for the enzyme in this species is believed to be ubiquinone. Couples the redox reaction to proton translocation (for every two electrons transferred, four hydrogen ions are translocated across the cytoplasmic membrane), and thus conserves the redox energy in a proton gradient. This is NADH-quinone oxidoreductase subunit I from Maricaulis maris (strain MCS10) (Caulobacter maris).